The primary structure comprises 701 residues: ABC transporter G family member 23 (701 aa).

The region spanning I7 to Y237 is the ABC transporter domain. G39–T46 contributes to the ATP binding site. 6 helical membrane passes run F335–I355, F493–I513, H541–V561, L574–I596, L608–I628, and L665–I685. The ABC transmembrane type-2 domain maps to F459–G686.

It belongs to the ABC transporter superfamily. ABCG family.

The protein resides in the membrane. The protein is ABC transporter G family member 23 (abcG23) of Dictyostelium discoideum (Social amoeba).